A 346-amino-acid polypeptide reads, in one-letter code: Partitioning defective 6 homolog alpha (346 aa).

The tract at residues 1–116 (MARPQRTPAR…SNSLQRRKKG (116 aa)) is interaction with PRKCI and PRKCZ. The region spanning 15–95 (IVEVKSKFDA…PPLRLLVQKR (81 aa)) is the PB1 domain. The segment at 126-253 (RTRPPLLISL…VTVKPANQRN (128 aa)) is interaction with PARD3 and CDC42. The Pseudo-CRIB domain occupies 133-150 (ISLPQDFRQVSSVIDVDL). Residues 157–250 (RVRLHKHGSD…NLIVTVKPAN (94 aa)) form the PDZ domain. The segment at 257 to 346 (RGASGRLTGP…IRGDGSGFSL (90 aa)) is disordered. A phosphoserine mark is found at Ser-278 and Ser-345.

Belongs to the PAR6 family. As to quaternary structure, interacts with MAP2K5. Interacts with PARD3. Interacts with GTP-bound forms of CDC42, RHOQ/TC10 and RAC1. Interacts with the N-terminal part of PRKCI and PRKCZ. Part of a complex with PARD3, CDC42 or RAC1 and PRKCI or PRKCZ. Part of a complex with LLGL1 and PRKCI. Interacts with human T-cell leukemia virus type I TAX protein. Interacts with PALS1 and CRB3. Interacts with TGFBR1; involved in TGF-beta induced epithelial to mesenchymal transition. Interacts with ECT2 ('Thr-359' phosphorylated form) and PRKCI. Interacts with DCTN1 and PCM1. Phosphorylated by the TGF-beta receptor. Post-translationally, ubiquitinated by the SCF(FBXO31) complex, leading to its proteasomal degradation. Expressed in pancreas, skeletal muscle, brain and heart. Weakly expressed in kidney and placenta.

It localises to the cytoplasm. The protein resides in the cell membrane. The protein localises to the cell projection. It is found in the ruffle. Its subcellular location is the cell junction. It localises to the tight junction. The protein resides in the cytoskeleton. The protein localises to the microtubule organizing center. It is found in the centrosome. Its subcellular location is the centriolar satellite. Adapter protein involved in asymmetrical cell division and cell polarization processes. Probably involved in the formation of epithelial tight junctions. Association with PARD3 may prevent the interaction of PARD3 with F11R/JAM1, thereby preventing tight junction assembly. The PARD6-PARD3 complex links GTP-bound Rho small GTPases to atypical protein kinase C proteins. Regulates centrosome organization and function. Essential for the centrosomal recruitment of key proteins that control centrosomal microtubule organization. This Homo sapiens (Human) protein is Partitioning defective 6 homolog alpha (PARD6A).